Reading from the N-terminus, the 144-residue chain is MGKVIQFPFGEEPEKKEEKELKTEPLTEEDFNQVIEVFKKDLKTLYPSQVKDILGVIGLGEKYGDEKFVVGLLMWEHYKHSHPLVSSFVAVLKGDKLEKISFLEAKNNYWDWKLMVKTYKDKFHTEELMRGLFELKERFEKGEI.

The tract at residues 1 to 24 is disordered; sequence MGKVIQFPFGEEPEKKEEKELKTE. Positions 12-24 are enriched in basic and acidic residues; the sequence is EPEKKEEKELKTE.

This is an uncharacterized protein from Aquifex aeolicus (strain VF5).